A 352-amino-acid chain; its full sequence is Mitochondrial ubiquitin ligase activator of NFKB 1 (352 aa).

Over 1–8 the chain is Cytoplasmic; it reads MESGGRPS. The chain crosses the membrane as a helical span at residues 9–29; it reads LCQFILLGTTSVVTAALYSVY. Over 30–238 the chain is Mitochondrial intermembrane; the sequence is RQKARVSQEL…LLQRQESSVR (209 aa). Residue K52 forms a Glycyl lysine isopeptide (Lys-Gly) (interchain with G-Cter in ubiquitin) linkage. Residues 239–259 traverse the membrane as a helical segment; it reads LWKVLALVFGFATCATLFFIL. The Cytoplasmic portion of the chain corresponds to 260–352; it reads RKQYLQRQER…ITRVIPLYNS (93 aa). Glycyl lysine isopeptide (Lys-Gly) (interchain with G-Cter in ubiquitin) cross-links involve residues K273 and K299. Residues 302-340 form an RING-type zinc finger; that stretch reads CVVCLSSFKSCVFLECGHVCSCTECYRALPEPKKCPICR.

As to quaternary structure, homooligomer. Interacts with MAP3K7/TAK1. Interacts with UBC9. Interacts with and sumoylates DNM1L. Interacts with MAVS. Interacts with TP53 (via N-terminus); the interaction leads to ubiquitination and proteasomal degradation of TP53. Post-translationally, ubiquitinated by PRKN during mitophagy, leading to its degradation and enhancement of mitophagy. Deubiquitinated by USP30. In terms of tissue distribution, widely expressed with highest levels in the heart, skeletal muscle, placenta, kidney and liver. Barely detectable in colon and thymus.

It localises to the mitochondrion outer membrane. The protein localises to the peroxisome. It catalyses the reaction S-ubiquitinyl-[E2 ubiquitin-conjugating enzyme]-L-cysteine + [acceptor protein]-L-lysine = [E2 ubiquitin-conjugating enzyme]-L-cysteine + N(6)-ubiquitinyl-[acceptor protein]-L-lysine.. It participates in protein modification; protein ubiquitination. The protein operates within protein modification; protein sumoylation. Exhibits weak E3 ubiquitin-protein ligase activity. E3 ubiquitin ligases accept ubiquitin from an E2 ubiquitin-conjugating enzyme in the form of a thioester and then directly transfer the ubiquitin to targeted substrates. Can ubiquitinate AKT1 preferentially at 'Lys-284' involving 'Lys-48'-linked polyubiquitination and seems to be involved in regulation of Akt signaling by targeting phosphorylated Akt to proteasomal degradation. Mediates polyubiquitination of cytoplasmic TP53 at 'Lys-24' which targets TP53 for proteasomal degradation, thus reducing TP53 levels in the cytoplasm and mitochondrion. Proposed to preferentially act as a SUMO E3 ligase at physiological concentrations. Plays a role in the control of mitochondrial morphology by promoting mitochondrial fragmentation, and influences mitochondrial localization. Likely to promote mitochondrial fission through negatively regulating the mitochondrial fusion proteins MFN1 and MFN2, acting in a pathway that is parallel to the PRKN/PINK1 regulatory pathway. May also be involved in the sumoylation of the membrane fission protein DNM1L. Inhibits cell growth. When overexpressed, activates JNK through MAP3K7/TAK1 and induces caspase-dependent apoptosis. Involved in the modulation of innate immune defense against viruses by inhibiting RIGI-dependent antiviral response. Can mediate RIGI sumoylation and disrupt its polyubiquitination. In Homo sapiens (Human), this protein is Mitochondrial ubiquitin ligase activator of NFKB 1 (MUL1).